A 360-amino-acid chain; its full sequence is Putative beta-glucosidase 15 (360 aa).

Composition is skewed to basic and acidic residues over residues 1–11 (MARRRMGEEGK) and 47–67 (GRREEDDAGGREKGEKRERKG). 2 disordered regions span residues 1–21 (MARRRMGEEGKGGGWGLNGRQ) and 35–103 (GWRS…RAER). Residues 75–86 (GKRRRERRRGGR) show a composition bias toward basic residues. Residue Tyr183 participates in a beta-D-glucoside binding. Cysteines 191 and 196 form a disulfide. A beta-D-glucoside is bound by residues Glu254, Trp301, 308 to 309 (EW), and Phe317. Catalysis depends on Glu254, which acts as the Nucleophile. Asn346 carries N-linked (GlcNAc...) asparagine glycosylation.

Belongs to the glycosyl hydrolase 1 family.

The enzyme catalyses Hydrolysis of terminal, non-reducing beta-D-glucosyl residues with release of beta-D-glucose.. The chain is Putative beta-glucosidase 15 (BGLU15) from Oryza sativa subsp. japonica (Rice).